A 77-amino-acid polypeptide reads, in one-letter code: EMBRYO SURROUNDING FACTOR 1-like protein 9 (77 aa).

Positions 1-22 are cleaved as a signal peptide; that stretch reads MSSSRFLILCIILISFFPLHEC. Disulfide bonds link Cys38–Cys54, Cys43–Cys75, Cys52–Cys71, and Cys55–Cys64.

It belongs to the MEG family. Expressed in flowers.

The protein is EMBRYO SURROUNDING FACTOR 1-like protein 9 (ESFL9) of Arabidopsis thaliana (Mouse-ear cress).